We begin with the raw amino-acid sequence, 225 residues long: Biosynthetic peptidoglycan transglycosylase (225 aa).

A helical membrane pass occupies residues 9 to 29 (LLIFIGAILLIQLWIFSSLVW).

It belongs to the glycosyltransferase 51 family.

The protein resides in the cell inner membrane. The catalysed reaction is [GlcNAc-(1-&gt;4)-Mur2Ac(oyl-L-Ala-gamma-D-Glu-L-Lys-D-Ala-D-Ala)](n)-di-trans,octa-cis-undecaprenyl diphosphate + beta-D-GlcNAc-(1-&gt;4)-Mur2Ac(oyl-L-Ala-gamma-D-Glu-L-Lys-D-Ala-D-Ala)-di-trans,octa-cis-undecaprenyl diphosphate = [GlcNAc-(1-&gt;4)-Mur2Ac(oyl-L-Ala-gamma-D-Glu-L-Lys-D-Ala-D-Ala)](n+1)-di-trans,octa-cis-undecaprenyl diphosphate + di-trans,octa-cis-undecaprenyl diphosphate + H(+). It functions in the pathway cell wall biogenesis; peptidoglycan biosynthesis. Functionally, peptidoglycan polymerase that catalyzes glycan chain elongation from lipid-linked precursors. The chain is Biosynthetic peptidoglycan transglycosylase from Acinetobacter baumannii (strain SDF).